A 109-amino-acid chain; its full sequence is Sulredoxin (109 aa).

The 105-residue stretch at 3–107 (WKRTISAKAL…IRDNNGWIEV (105 aa)) folds into the Rieske domain. The [2Fe-2S] cluster site is built by Cys-43, His-45, Cys-62, and His-65.

As to quaternary structure, homooligomeric. Requires [2Fe-2S] cluster as cofactor.

It is found in the cytoplasm. Functionally, not yet known. The polypeptide is Sulredoxin (sdx) (Sulfurisphaera tokodaii (strain DSM 16993 / JCM 10545 / NBRC 100140 / 7) (Sulfolobus tokodaii)).